A 121-amino-acid polypeptide reads, in one-letter code: Large ribosomal subunit protein uL18 (121 aa).

It belongs to the universal ribosomal protein uL18 family. In terms of assembly, part of the 50S ribosomal subunit; part of the 5S rRNA/L5/L18/L25 subcomplex. Contacts the 5S and 23S rRNAs.

This is one of the proteins that bind and probably mediate the attachment of the 5S RNA into the large ribosomal subunit, where it forms part of the central protuberance. This chain is Large ribosomal subunit protein uL18, found in Paraburkholderia xenovorans (strain LB400).